A 236-amino-acid polypeptide reads, in one-letter code: Uridylate kinase (236 aa).

ATP is bound at residue 8 to 11; the sequence is KLSG. G51 is a UMP binding site. ATP is bound by residues G52 and R56. UMP contacts are provided by residues D71 and 133 to 140; that span reads TGRPFFTT. Residues N161, F167, and D170 each contribute to the ATP site.

The protein belongs to the UMP kinase family. Homohexamer.

The protein localises to the cytoplasm. It catalyses the reaction UMP + ATP = UDP + ADP. It functions in the pathway pyrimidine metabolism; CTP biosynthesis via de novo pathway; UDP from UMP (UMPK route): step 1/1. Its activity is regulated as follows. Inhibited by UTP. Functionally, catalyzes the reversible phosphorylation of UMP to UDP. This chain is Uridylate kinase, found in Mesomycoplasma hyopneumoniae (strain 232) (Mycoplasma hyopneumoniae).